The primary structure comprises 190 residues: 3-isopropylmalate dehydratase small subunit (190 aa).

This sequence belongs to the LeuD family. LeuD type 1 subfamily. In terms of assembly, heterodimer of LeuC and LeuD.

The catalysed reaction is (2R,3S)-3-isopropylmalate = (2S)-2-isopropylmalate. It functions in the pathway amino-acid biosynthesis; L-leucine biosynthesis; L-leucine from 3-methyl-2-oxobutanoate: step 2/4. Catalyzes the isomerization between 2-isopropylmalate and 3-isopropylmalate, via the formation of 2-isopropylmaleate. In Staphylococcus aureus (strain MRSA252), this protein is 3-isopropylmalate dehydratase small subunit.